A 175-amino-acid polypeptide reads, in one-letter code: Shikimate kinase (175 aa).

12–19 (GGRASGKS) serves as a coordination point for ATP.

It belongs to the shikimate kinase family.

It is found in the cytoplasm. The catalysed reaction is shikimate + ATP = 3-phosphoshikimate + ADP + H(+). It functions in the pathway metabolic intermediate biosynthesis; chorismate biosynthesis; chorismate from D-erythrose 4-phosphate and phosphoenolpyruvate: step 5/7. The polypeptide is Shikimate kinase (Nitratidesulfovibrio vulgaris (strain ATCC 29579 / DSM 644 / CCUG 34227 / NCIMB 8303 / VKM B-1760 / Hildenborough) (Desulfovibrio vulgaris)).